A 374-amino-acid chain; its full sequence is Putative clathrin assembly protein At1g33340 (374 aa).

Residues 30-163 enclose the ENTH domain; it reads YNEKAFFDIE…GWIINQAGKL (134 aa).

It localises to the membrane. The protein localises to the clathrin-coated pit. Its subcellular location is the golgi apparatus. The protein resides in the cytoplasmic vesicle. It is found in the clathrin-coated vesicle. This is Putative clathrin assembly protein At1g33340 from Arabidopsis thaliana (Mouse-ear cress).